Consider the following 133-residue polypeptide: Interleukin-5 (133 aa).

Positions 1–20 (MRRMLLHLSVLTLSCVWATA) are cleaved as a signal peptide. N-linked (GlcNAc...) asparagine glycosylation is found at Asn46, Asn75, and Asn89.

Belongs to the IL-5 family. In terms of assembly, homodimer; disulfide-linked. Interacts with IL5RA. Interacts with CSF2RB. Expressed in lymphoid cells, including spleen, thymus, lymph nodes and peripheral blood mononuclear cells.

The protein resides in the secreted. Its function is as follows. Homodimeric cytokine expressed predominantly by T-lymphocytes and NK cells that plays an important role in the survival, differentiation, and chemotaxis of eosinophils. Also acts on activated and resting B-cells to induce immunoglobulin production, growth, and differentiation. Mechanistically, exerts its biological effects through a receptor composed of IL5RA subunit and the cytokine receptor common subunit beta/CSF2RB. Binding to the receptor leads to activation of various kinases including LYN, SYK and JAK2 and thereby propagates signals through the RAS-MAPK and JAK-STAT5 pathways respectively. The sequence is that of Interleukin-5 (Il5) from Mus musculus (Mouse).